A 690-amino-acid polypeptide reads, in one-letter code: Sodium-dependent phosphate transport protein 2B (690 aa).

Positions 1 to 42 (MAPWPELGDAQPNPDKYLEGAAGQQPTAPDKSKETNKTDNTE) are disordered. Residues 1-100 (MAPWPELGDA…ILCFFQGIGR (100 aa)) lie on the Cytoplasmic side of the membrane. Residues 30 to 40 (DKSKETNKTDN) show a composition bias toward basic and acidic residues. Residues 101 to 121 (LILLLGFLYFFVCSLDILSSA) traverse the membrane as a helical segment. Topologically, residues 122 to 135 (FQLVGGKMAGQFFS) are extracellular. A helical membrane pass occupies residues 136-156 (NSSIMSNPLLGLVIGVLVTVL). Residues 157–212 (VQSSSTSTSIVVSMVSSSLLTVRAAIPIIMGANIGTSITNTIVALMQVGDRSEFRR) lie on the Cytoplasmic side of the membrane. A helical transmembrane segment spans residues 213 to 233 (AFAGATVHDFFNWLSVLVLLP). The Extracellular segment spans residues 234-362 (VEVATHYLEI…IFVNFHLPDL (129 aa)). Residues N295, N308, N313, N321, and N340 are each glycosylated (N-linked (GlcNAc...) asparagine). The cysteines at positions 303 and 350 are disulfide-linked. The chain crosses the membrane as a helical span at residues 363-383 (AVGTILLILSLLVLCGCLIMI). Over 384-407 (VKILGSVLKGQVATVIKKTINTDF) the chain is Cytoplasmic. A helical transmembrane segment spans residues 408 to 428 (PFPFAWLTGYLAILVGAGMTF). The Extracellular segment spans residues 429-485 (IVQSSSVFTSALTPLIGIGVITIERAYPLTLGSNIGTTTTAILAALASPGNALRSSL). A helical transmembrane segment spans residues 486–506 (QIALCHFFFNISGILLWYPIP). Residues 507–525 (FTRLPIRMAKGLGNISAKY) lie on the Cytoplasmic side of the membrane. The chain crosses the membrane as a helical span at residues 526-546 (RWFAVFYLIIFFFLIPLTVFG). At 547-552 (LSLAGW) the chain is on the extracellular side. Residues 553–573 (RVLVGVGVPVVFIIILVLCLR) traverse the membrane as a helical segment. Over 574-689 (LLQSRCPRVL…ASDSKTECTA (116 aa)) the chain is Cytoplasmic.

The protein belongs to the SLC34A transporter family. In terms of tissue distribution, highly expressed in lung. Also detected in pancreas, kidney, small intestine, ovary, testis, prostate and mammary gland. In lung, it is found in alveolar type II cells but not in bronchiolar epithelium.

The protein resides in the apical cell membrane. It catalyses the reaction 3 Na(+)(out) + phosphate(out) = 3 Na(+)(in) + phosphate(in). Its function is as follows. Involved in actively transporting phosphate into cells via Na(+) cotransport. This Homo sapiens (Human) protein is Sodium-dependent phosphate transport protein 2B (SLC34A2).